Reading from the N-terminus, the 763-residue chain is Phosphoglycerol transferase I (763 aa).

Helical transmembrane passes span 1–21, 26–46, 77–97, and 108–128; these read MSEL…AWKA, WWFA…ITLF, ILPG…LGWI, and FGYS…SPAF.

The protein belongs to the OpgB family.

Its subcellular location is the cell inner membrane. The enzyme catalyses a phosphatidylglycerol + a membrane-derived-oligosaccharide D-glucose = a 1,2-diacyl-sn-glycerol + a membrane-derived-oligosaccharide 6-(glycerophospho)-D-glucose.. The protein operates within glycan metabolism; osmoregulated periplasmic glucan (OPG) biosynthesis. Its function is as follows. Transfers a phosphoglycerol residue from phosphatidylglycerol to the membrane-bound nascent glucan backbones. This Escherichia coli O139:H28 (strain E24377A / ETEC) protein is Phosphoglycerol transferase I.